The chain runs to 129 residues: Succinate dehydrogenase subunit 3-1, mitochondrial (129 aa).

The transit peptide at 1–58 (MEKYHSNSRFAPFRDAPFALRGALGSSGSSFSSIDSLRRSSTLEQARGYTSRPLGAVR) directs the protein to the mitochondrion. Positions 25-35 (GSSGSSFSSID) are enriched in low complexity. The segment at 25–80 (GSSGSSFSSIDSLRRSSTLEQARGYTSRPLGAVRPKMLPSGCRPLHTSHPLSAPVA) is disordered. Histidine 87 contributes to the heme binding site. Residues 105–127 (IFGAALGAAIISIPLATKFSLMF) traverse the membrane as a helical segment.

In terms of assembly, component of complex II composed of eight subunits in plants: four classical SDH subunits SDH1, SDH2, SDH3 and SDH4 (a flavoprotein (FP), an iron-sulfur protein (IP), and a cytochrome b composed of a large and a small subunit.), as well as four subunits unknown in mitochondria from bacteria and heterotrophic eukaryotes. Requires heme as cofactor.

The protein localises to the mitochondrion inner membrane. It participates in carbohydrate metabolism; tricarboxylic acid cycle. In terms of biological role, membrane-anchoring subunit of succinate dehydrogenase (SDH). The polypeptide is Succinate dehydrogenase subunit 3-1, mitochondrial (Oryza sativa subsp. japonica (Rice)).